The sequence spans 603 residues: UvrABC system protein C (603 aa).

The region spanning 13–92 (NGPGVYLMKD…IRKHKPRYNI (80 aa)) is the GIY-YIG domain. The UVR domain maps to 202–237 (NDLLQKIKEQMAAASERQEYELAARLRDRMFAIQAT).

The protein belongs to the UvrC family. As to quaternary structure, interacts with UvrB in an incision complex.

Its subcellular location is the cytoplasm. In terms of biological role, the UvrABC repair system catalyzes the recognition and processing of DNA lesions. UvrC both incises the 5' and 3' sides of the lesion. The N-terminal half is responsible for the 3' incision and the C-terminal half is responsible for the 5' incision. This is UvrABC system protein C from Desulfatibacillum aliphaticivorans.